The sequence spans 343 residues: MTDKVRLTTMVQAAGUAAKLGPAGLEEAIHDITRSDDPNLIVGVEGAEDAGIYRIGENLALVETTDIITPLVDDPFTFGRIAAANALSDVYAMGGRPVTAMNLAFFPACSLPTSVLAAILAGGSAALKEAGTCLVGGHTVEDDELKFGLAVTGLIDPARVVRNCTARPGDLIVITKPLGTGIISTAIKAEMIEPEVEAEATRWMTTLNAKAADLMVACRATAATDVTGFGFIGHACEMALGAKVSFKIELARVPVIPGVPALIDDGMVPAGCYRNRQHYEQHVSGNSGDPLLPLFDPQTSGGLLITFAPDDARTFLSRAGKEGLFAACIGEVEPAGGTPIVFV.

Selenocysteine 16 is a catalytic residue. Position 16 (selenocysteine 16) is a non-standard amino acid, selenocysteine. ATP contacts are provided by residues lysine 19 and 46 to 48; that span reads GAE. Aspartate 49 contributes to the Mg(2+) binding site. ATP is bound by residues aspartate 66, aspartate 89, and 137–139; that span reads GHT. Aspartate 89 lines the Mg(2+) pocket. Aspartate 225 is a binding site for Mg(2+).

Belongs to the selenophosphate synthase 1 family. Class I subfamily. As to quaternary structure, homodimer. Requires Mg(2+) as cofactor.

It carries out the reaction hydrogenselenide + ATP + H2O = selenophosphate + AMP + phosphate + 2 H(+). Synthesizes selenophosphate from selenide and ATP. The sequence is that of Selenide, water dikinase from Citrifermentans bemidjiense (strain ATCC BAA-1014 / DSM 16622 / JCM 12645 / Bem) (Geobacter bemidjiensis).